The primary structure comprises 271 residues: Proteasome inhibitor PI31 subunit (271 aa).

At Ala-2 the chain carries N-acetylalanine. Residues 2-150 form an important for homodimerization and interaction with FBXO7 region; that stretch reads AGLEVLFASA…PIHEQWEKAR (149 aa). Phosphoserine occurs at positions 153 and 189. The residue at position 205 (Arg-205) is an Omega-N-methylarginine. Arg-219 carries the post-translational modification Asymmetric dimethylarginine. The interval 226–271 is disordered; sequence SGLPNRLPPGAVPPGARFDPFGPIGTSPSGPNPDHLPPPGYDDMYL. Residue Arg-231 is modified to Omega-N-methylarginine. The residue at position 252 (Ser-252) is a Phosphoserine. The span at 255-265 shows a compositional bias: pro residues; the sequence is GPNPDHLPPPG.

The protein belongs to the proteasome inhibitor PI31 family. Monomer and homodimer. Interacts with FBXO7.

The protein localises to the cytoplasm. It is found in the endoplasmic reticulum. Functionally, plays an important role in control of proteasome function. Inhibits the hydrolysis of protein and peptide substrates by the 20S proteasome. Also inhibits the activation of the proteasome by the proteasome regulatory proteins PA700 and PA28. The chain is Proteasome inhibitor PI31 subunit (Psmf1) from Mus musculus (Mouse).